Consider the following 101-residue polypeptide: Small ribosomal subunit protein uS14 (101 aa).

The protein belongs to the universal ribosomal protein uS14 family. In terms of assembly, part of the 30S ribosomal subunit. Contacts proteins S3 and S10.

Functionally, binds 16S rRNA, required for the assembly of 30S particles and may also be responsible for determining the conformation of the 16S rRNA at the A site. The sequence is that of Small ribosomal subunit protein uS14 from Chlamydia muridarum (strain MoPn / Nigg).